The sequence spans 93 residues: Ribonuclease P protein component 1 (93 aa).

Belongs to the eukaryotic/archaeal RNase P protein component 1 family. Consists of a catalytic RNA component and at least 4-5 protein subunits.

Its subcellular location is the cytoplasm. It catalyses the reaction Endonucleolytic cleavage of RNA, removing 5'-extranucleotides from tRNA precursor.. In terms of biological role, part of ribonuclease P, a protein complex that generates mature tRNA molecules by cleaving their 5'-ends. In Methanosphaera stadtmanae (strain ATCC 43021 / DSM 3091 / JCM 11832 / MCB-3), this protein is Ribonuclease P protein component 1.